The chain runs to 1106 residues: Protein shuttle craft (1106 aa).

Disordered regions lie at residues 7–26 and 189–371; these read QLTN…AMAD and PAAA…KLSQ. A compositionally biased stretch (low complexity) spans 189-201; that stretch reads PAAATTNGNSTAS. Composition is skewed to basic and acidic residues over residues 232–270 and 278–323; these read NYER…RDSR and RRSD…RDRI. Thr-335 is modified (phosphothreonine). Phosphoserine occurs at positions 336, 339, 343, and 354. Polar residues predominate over residues 336 to 354; that stretch reads SNESAHPSPEKQSQLQQIS. The segment at 386–433 adopts an RING-type; atypical zinc-finger fold; it reads CLVCVEAIKSHQPTWSCRNCYHMLHLKCTITWASSSKSEVGWRCPACQ. 8 NF-X1-type zinc fingers span residues 474-492, 527-546, 585-604, 644-667, 706-725, 733-752, 844-867, and 876-896; these read CSHA…PCQA, CGEH…ACSE, CGHH…PCKL, CGKP…PCPK, CGKH…DCPL, CGKH…PCYR, CGGH…ICRQ, and CGHK…PCKE. In terms of domain architecture, R3H spans 1006–1071; it reads TKSVYETLTD…NRNVVATAHK (66 aa).

It belongs to the NFX1 family. In terms of tissue distribution, ovaries and embryonic central nervous system.

The protein localises to the nucleus. Its function is as follows. Plays an essential role during the late stages of embryonic neurogenesis. May either fine-tune the guidance or the spatial maintenance of the migrating SNB and in nerve roots, which are composed of axons originating from distinct groups of motor neurons and may be required to either guide or maintain the position of these nerves along a direct and straight path to their ultimate targets in particular muscle fields. May play a role in egg chamber development and/or may confer essential maternal contributions to the early embryo. This chain is Protein shuttle craft (stc), found in Drosophila melanogaster (Fruit fly).